The sequence spans 562 residues: Pyruvate kinase isozyme G, chloroplastic (562 aa).

Position 121 (arginine 121) interacts with substrate. The K(+) site is built by asparagine 123, serine 125, aspartate 156, and threonine 157. 123–126 (NMSH) contacts ATP. Glutamate 308 contributes to the Mg(2+) binding site. 3 residues coordinate substrate: glycine 331, aspartate 332, and threonine 364. Position 332 (aspartate 332) interacts with Mg(2+).

Belongs to the pyruvate kinase family. In terms of assembly, homotetramer. The cofactor is Mg(2+). Requires K(+) as cofactor. As to expression, highest levels in leaves. Also found in stems, roots and flowers.

The protein localises to the plastid. It localises to the chloroplast. It catalyses the reaction pyruvate + ATP = phosphoenolpyruvate + ADP + H(+). Its pathway is carbohydrate degradation; glycolysis; pyruvate from D-glyceraldehyde 3-phosphate: step 5/5. This chain is Pyruvate kinase isozyme G, chloroplastic, found in Nicotiana tabacum (Common tobacco).